A 198-amino-acid polypeptide reads, in one-letter code: Na(+)-translocating NADH-quinone reductase subunit E (198 aa).

A run of 6 helical transmembrane segments spans residues 11 to 31 (SVFI…FLAV), 35 to 55 (VSTS…AVPV), 77 to 97 (FLNF…LEMF), 110 to 130 (GIFL…SFMV), 140 to 160 (VVYG…LAGL), and 176 to 196 (LGIT…FSGI).

The protein belongs to the NqrDE/RnfAE family. Composed of six subunits; NqrA, NqrB, NqrC, NqrD, NqrE and NqrF.

The protein resides in the cell inner membrane. It catalyses the reaction a ubiquinone + n Na(+)(in) + NADH + H(+) = a ubiquinol + n Na(+)(out) + NAD(+). NQR complex catalyzes the reduction of ubiquinone-1 to ubiquinol by two successive reactions, coupled with the transport of Na(+) ions from the cytoplasm to the periplasm. NqrA to NqrE are probably involved in the second step, the conversion of ubisemiquinone to ubiquinol. This Actinobacillus succinogenes (strain ATCC 55618 / DSM 22257 / CCUG 43843 / 130Z) protein is Na(+)-translocating NADH-quinone reductase subunit E.